The following is a 361-amino-acid chain: Phenylalanine--tRNA ligase alpha subunit (361 aa).

A Mg(2+)-binding site is contributed by Glu-260.

This sequence belongs to the class-II aminoacyl-tRNA synthetase family. Phe-tRNA synthetase alpha subunit type 1 subfamily. In terms of assembly, tetramer of two alpha and two beta subunits. The cofactor is Mg(2+).

The protein resides in the cytoplasm. The catalysed reaction is tRNA(Phe) + L-phenylalanine + ATP = L-phenylalanyl-tRNA(Phe) + AMP + diphosphate + H(+). This is Phenylalanine--tRNA ligase alpha subunit from Allorhizobium ampelinum (strain ATCC BAA-846 / DSM 112012 / S4) (Agrobacterium vitis (strain S4)).